The following is a 505-amino-acid chain: Catalase (505 aa).

Catalysis depends on residues histidine 56 and asparagine 129. Residue tyrosine 339 coordinates heme.

It belongs to the catalase family. Requires heme as cofactor.

The protein localises to the cytoplasm. It carries out the reaction 2 H2O2 = O2 + 2 H2O. In terms of biological role, decomposes hydrogen peroxide into water and oxygen; serves to protect cells from the toxic effects of hydrogen peroxide. The chain is Catalase (katA) from Helicobacter pylori (strain J99 / ATCC 700824) (Campylobacter pylori J99).